Consider the following 947-residue polypeptide: Protein translocase subunit SecA (947 aa).

Residues glutamine 87, 105 to 109 (GEGKT), and aspartate 525 each bind ATP. Residues 905 to 928 (PADNADKTARNPNDPSTWGKVGRN) form a disordered region. Zn(2+) contacts are provided by cysteine 931, cysteine 933, cysteine 942, and histidine 943.

It belongs to the SecA family. As to quaternary structure, monomer and homodimer. Part of the essential Sec protein translocation apparatus which comprises SecA, SecYEG and auxiliary proteins SecDF-YajC and YidC. Requires Zn(2+) as cofactor.

The protein resides in the cell inner membrane. The protein localises to the cytoplasm. The enzyme catalyses ATP + H2O + cellular proteinSide 1 = ADP + phosphate + cellular proteinSide 2.. In terms of biological role, part of the Sec protein translocase complex. Interacts with the SecYEG preprotein conducting channel. Has a central role in coupling the hydrolysis of ATP to the transfer of proteins into and across the cell membrane, serving both as a receptor for the preprotein-SecB complex and as an ATP-driven molecular motor driving the stepwise translocation of polypeptide chains across the membrane. This chain is Protein translocase subunit SecA, found in Rhodopseudomonas palustris (strain BisB18).